Consider the following 143-residue polypeptide: Transcriptional regulator MraZ (143 aa).

2 SpoVT-AbrB domains span residues 5-47 and 76-119; these read TYEP…SAEE and ASDE…DAAA.

It belongs to the MraZ family. Forms oligomers.

Its subcellular location is the cytoplasm. The protein localises to the nucleoid. The chain is Transcriptional regulator MraZ from Kocuria rhizophila (strain ATCC 9341 / DSM 348 / NBRC 103217 / DC2201).